Consider the following 170-residue polypeptide: Inosine/xanthosine triphosphatase (170 aa).

This sequence belongs to the YjjX NTPase family. As to quaternary structure, homodimer. Requires Mg(2+) as cofactor. Mn(2+) serves as cofactor.

The catalysed reaction is XTP + H2O = XDP + phosphate + H(+). It carries out the reaction ITP + H2O = IDP + phosphate + H(+). In terms of biological role, phosphatase that hydrolyzes non-canonical purine nucleotides such as XTP and ITP to their respective diphosphate derivatives. Probably excludes non-canonical purines from DNA/RNA precursor pool, thus preventing their incorporation into DNA/RNA and avoiding chromosomal lesions. The protein is Inosine/xanthosine triphosphatase of Aliivibrio fischeri (strain MJ11) (Vibrio fischeri).